We begin with the raw amino-acid sequence, 87 residues long: Phosphoribosyl-ATP pyrophosphatase (87 aa).

This sequence belongs to the PRA-PH family.

It is found in the cytoplasm. It catalyses the reaction 1-(5-phospho-beta-D-ribosyl)-ATP + H2O = 1-(5-phospho-beta-D-ribosyl)-5'-AMP + diphosphate + H(+). It participates in amino-acid biosynthesis; L-histidine biosynthesis; L-histidine from 5-phospho-alpha-D-ribose 1-diphosphate: step 2/9. This Paenarthrobacter aurescens (strain TC1) protein is Phosphoribosyl-ATP pyrophosphatase.